The chain runs to 191 residues: CASP-like protein 2U4 (191 aa).

Residues 1-25 (MGAYDGAEAPRAAPASTAANSRPSR) lie on the Cytoplasmic side of the membrane. Residues 26 to 46 (LLLLHSLLLRLVAVVLSILVI) traverse the membrane as a helical segment. Over 47 to 68 (AVMVHAKQRVMIFKAEWDNSKA) the chain is Extracellular. The helical transmembrane segment at 69 to 89 (FVALVTISAICLGYSFLQFIL) threads the bilayer. The Cytoplasmic portion of the chain corresponds to 90–114 (SAFHLCSKSWKSPTKCWAWMNFIAD). A helical membrane pass occupies residues 115-135 (QILTYAMLGAAAAAAELAYIA). The Extracellular portion of the chain corresponds to 136–157 (KNGSSRAQWQPICSTFNTFCTR). Asparagine 137 is a glycosylation site (N-linked (GlcNAc...) asparagine). The helical transmembrane segment at 158 to 178 (AGASIILSFIAVLALANSSAI) threads the bilayer. At 179–191 (SAYHLFRRPSSSV) the chain is on the cytoplasmic side.

The protein belongs to the Casparian strip membrane proteins (CASP) family. In terms of assembly, homodimer and heterodimers.

It is found in the cell membrane. The chain is CASP-like protein 2U4 from Selaginella moellendorffii (Spikemoss).